A 197-amino-acid polypeptide reads, in one-letter code: Prefoldin subunit 3 (197 aa).

Residues 1-26 (MASLALRGSSENPAPTKDTTTNPRGI) form a disordered region. Residues 9-23 (SSENPAPTKDTTTNP) show a composition bias toward polar residues.

Belongs to the prefoldin subunit alpha family. In terms of assembly, heterohexamer of two PFD-alpha type and four PFD-beta type subunits.

Its function is as follows. Prefoldin subunit; part of the gene cluster that mediates the biosynthesis of elsinochromes, pigments consisting of at least four interconvertible tautomers (A, B, C and D) that have a core phenolic quinone to which various side chains are attached and which play an important role in fungal pathogenesis. The non-reducing polyketide synthase PKS1 was proposed to iteratively catalyze decarboxylation between acetyl-CoA and malonyl-CoA subunits for polyketide chain elongation. The released polyketide undergoes cyclization to form an aromatic ring, and proceeds via serial modification steps to produce the heptaketide back- bone of elsinochrome. As elsinochrome has a symmetrical structure, two identical heptaketides are fused to form a core 1,2-dihydrobenzo-perylene ring structure, which can then be successively modified to produce the various derivatives of elsinochrome. Some of these reactions may be cooperatively carried out, at least in part, by the products of RDT1, OXR1 and PKS1. PRF1, embedded within the elsinochrome cluster possibly functions to stabilize some of the biosynthetic enzymes required for elsinochrome production. As prefoldin is a hexamer containing 2 a and 4 b subunits, additional prefoldin subunits, whose coding genes may not immediately link to the elsinochrome biosynthetic gene cluster, are required to fulfill the chaperone function. In addition, no methyltransferase-coding gene exists within the biosynthetic gene cluster, even though elsinochrome has four methyl groups at positions C3, C7, C8 and C12. Apparently, the identified gene cluster does not contain the entire entourage of genes responsible for elsinochrome biosynthesis. Once elsinochrome is synthesized, it must be exported outside the fungal cells, which is probably accomplished by the ECT1 transporter, to avoid toxicity. The chain is Prefoldin subunit 3 from Elsinoe fawcettii (Citrus scab fungus).